The primary structure comprises 224 residues: Phosphoribosylformylglycinamidine synthase subunit PurQ (224 aa).

Residues 2–224 enclose the Glutamine amidotransferase type-1 domain; that stretch reads TVAIIRFGGS…DGQGVLEGFR (223 aa). Cys-85 functions as the Nucleophile in the catalytic mechanism. Residues His-202 and Glu-204 contribute to the active site. A disordered region spans residues 204-224; that stretch reads ERASLPDIGPTDGQGVLEGFR.

Part of the FGAM synthase complex composed of 1 PurL, 1 PurQ and 2 PurS subunits.

It localises to the cytoplasm. It carries out the reaction N(2)-formyl-N(1)-(5-phospho-beta-D-ribosyl)glycinamide + L-glutamine + ATP + H2O = 2-formamido-N(1)-(5-O-phospho-beta-D-ribosyl)acetamidine + L-glutamate + ADP + phosphate + H(+). The enzyme catalyses L-glutamine + H2O = L-glutamate + NH4(+). Its pathway is purine metabolism; IMP biosynthesis via de novo pathway; 5-amino-1-(5-phospho-D-ribosyl)imidazole from N(2)-formyl-N(1)-(5-phospho-D-ribosyl)glycinamide: step 1/2. Part of the phosphoribosylformylglycinamidine synthase complex involved in the purines biosynthetic pathway. Catalyzes the ATP-dependent conversion of formylglycinamide ribonucleotide (FGAR) and glutamine to yield formylglycinamidine ribonucleotide (FGAM) and glutamate. The FGAM synthase complex is composed of three subunits. PurQ produces an ammonia molecule by converting glutamine to glutamate. PurL transfers the ammonia molecule to FGAR to form FGAM in an ATP-dependent manner. PurS interacts with PurQ and PurL and is thought to assist in the transfer of the ammonia molecule from PurQ to PurL. The sequence is that of Phosphoribosylformylglycinamidine synthase subunit PurQ from Natronomonas pharaonis (strain ATCC 35678 / DSM 2160 / CIP 103997 / JCM 8858 / NBRC 14720 / NCIMB 2260 / Gabara) (Halobacterium pharaonis).